The sequence spans 3948 residues: Hybrid PKS-NRPS synthetase fsa1 (3948 aa).

One can recognise a Ketosynthase family 3 (KS3) domain in the interval 4–438 (SEPIAVIGSA…GTNAHAIIEA (435 aa)). Catalysis depends on for beta-ketoacyl synthase activity residues Cys177, His316, and His358. The tract at residues 543 to 846 (IFTGQGTQWP…LDTIEAISEG (304 aa)) is malonyl-CoA:ACP transacylase (MAT) domain. Positions 931–1066 (HPLLGRRCHD…AQIKASLGTP (136 aa)) are N-terminal hotdog fold. Positions 931–1233 (HPLLGRRCHD…MELVPFSPAT (303 aa)) are dehydratase (DH) domain. The PKS/mFAS DH domain occupies 931–1235 (HPLLGRRCHD…LVPFSPATPA (305 aa)). His964 functions as the Proton acceptor; for dehydratase activity in the catalytic mechanism. The C-terminal hotdog fold stretch occupies residues 1081–1235 (LRPVSVDRFY…LVPFSPATPA (155 aa)). Asp1141 (proton donor; for dehydratase activity) is an active-site residue. The methyltransferase (MT) domain stretch occupies residues 1381–1578 (YEQGFGLNLV…TTPPVHKILP (198 aa)). The interval 2105–2277 (TFLLIGLTGE…VAASSIDISS (173 aa)) is ketoreductase (KR) domain. The Carrier 1 domain maps to 2389–2464 (AIIKESFIVR…DLVDESLDLL (76 aa)). The residue at position 2424 (Ser2424) is an O-(pantetheine 4'-phosphoryl)serine. Residues 2475–2555 (EAGNAHPAKP…TDNLTPPRTF (81 aa)) are disordered. Polar residues-rich tracts occupy residues 2487–2505 (VIPQ…QGTS) and 2513–2528 (GSDS…LTSW). Basic and acidic residues predominate over residues 2529 to 2541 (DRQDLSPPDKSDD). Polar residues predominate over residues 2542–2551 (APNSTDNLTP). A condensation (C) domain region spans residues 2547–2976 (DNLTPPRTFP…TQVLLRSYLS (430 aa)). Residues 3000-3402 (LKVAVDAGKA…PDTFFGTSGT (403 aa)) form an adenylation (A) (KR) domain region. One can recognise a Carrier 2 domain in the interval 3540–3617 (KSLTASEKRL…AMASVLEDCG (78 aa)). Ser3577 is subject to O-(pantetheine 4'-phosphoryl)serine. A reductase (RED) domain region spans residues 3653-3870 (LTGSSGYLGR…MPVNEIVEAI (218 aa)).

In the C-terminal section; belongs to the NRP synthetase family.

The catalysed reaction is L-serine + 7 malonyl-CoA + acetyl-CoA + 2 S-adenosyl-L-methionine + ATP + 8 NADPH + 11 H(+) = (5S)-3-[(2E,6R,8E,10E,12E)-2,6-dimethyltetradeca-2,8,10,12-tetraenoyl]-5-(hydroxymethyl)pyrrolidine-2,4-dione + AMP + 2 S-adenosyl-L-homocysteine + 7 CO2 + diphosphate + 8 NADP(+) + 8 CoA + 6 H2O. Its pathway is mycotoxin biosynthesis. Its function is as follows. Hybrid PKS-NRPS synthetase; part of the gene cluster that mediates the biosynthesis of HIV-1 integrase inhibitor equisetin and of fusarisetin A, both trans-fused decalin-containing tetramic acids showing also antimicrobial activity. The PKS module of fsa1 together with the enoylreductase fsa3 catalyze the formation of the polyketide unit which is then conjugated to L-serine by the condensation domain of the fsa1 NRPS module. Activity of the Dieckmann cyclase domain (RED) results in release of the Dieckmann product intermediate. Diels-Alderase fsa2 is involved in endo-selective Diels-Alder cycloaddition to form the decalin ring, leading to the production of N-desmethylequisetin also called trichosetin. Subsequent N-methylation is carried out by fsa4 to give equisetin. The enzymatic gene responsible for the conversion of equisetin to fusarisetin A has not been identified yet and is probably located outside of the fsa cluster. This chain is Hybrid PKS-NRPS synthetase fsa1, found in Fusarium sp. (strain FN080326).